The sequence spans 329 residues: Caveolae-associated protein 4a (329 aa).

2 disordered regions span residues 198–260 (SKEN…NIAK) and 274–329 (KERT…IHED). Positions 198 to 262 (SKENMNKTRE…RLKENIAKKA (65 aa)) form a coiled coil. Over residues 201-220 (NMNKTREKTRENLSKTKESL) the composition is skewed to basic and acidic residues. Polar residues predominate over residues 221–232 (SKTGQTLGTKFN). Residues 242–260 (EQREKIKQSSERLKENIAK) show a composition bias toward basic and acidic residues. The span at 279–290 (AEGQEGAEAEPA) shows a compositional bias: low complexity. T292 is modified (phosphothreonine). Residues 310 to 329 (TENKREGPVSEEGATRIHED) are compositionally biased toward basic and acidic residues.

It belongs to the CAVIN family.

It is found in the cytoplasm. The protein localises to the myofibril. Its subcellular location is the sarcomere. The protein resides in the membrane. It localises to the caveola. Functionally, induces rhoa activation and activates nppa transcription and myofibrillar organization through the rho/rock signaling pathway. This chain is Caveolae-associated protein 4a (cavin4a), found in Danio rerio (Zebrafish).